The primary structure comprises 369 residues: Glutamate 5-kinase (369 aa).

An ATP-binding site is contributed by K9. The substrate site is built by S49, D136, and N148. Residues T168–D169 and T210–K216 contribute to the ATP site. The region spanning R275–W355 is the PUA domain.

This sequence belongs to the glutamate 5-kinase family.

It localises to the cytoplasm. The enzyme catalyses L-glutamate + ATP = L-glutamyl 5-phosphate + ADP. Its pathway is amino-acid biosynthesis; L-proline biosynthesis; L-glutamate 5-semialdehyde from L-glutamate: step 1/2. In terms of biological role, catalyzes the transfer of a phosphate group to glutamate to form L-glutamate 5-phosphate. The chain is Glutamate 5-kinase from Neisseria meningitidis serogroup A / serotype 4A (strain DSM 15465 / Z2491).